Consider the following 640-residue polypeptide: 1-deoxy-D-xylulose-5-phosphate synthase (640 aa).

Thiamine diphosphate-binding positions include histidine 79 and 120 to 122 (AHA). Aspartate 151 is a Mg(2+) binding site. Residues 152–153 (GS), asparagine 180, tyrosine 287, and glutamate 369 each bind thiamine diphosphate. Asparagine 180 provides a ligand contact to Mg(2+).

The protein belongs to the transketolase family. DXPS subfamily. In terms of assembly, homodimer. It depends on Mg(2+) as a cofactor. The cofactor is thiamine diphosphate.

It catalyses the reaction D-glyceraldehyde 3-phosphate + pyruvate + H(+) = 1-deoxy-D-xylulose 5-phosphate + CO2. Its pathway is metabolic intermediate biosynthesis; 1-deoxy-D-xylulose 5-phosphate biosynthesis; 1-deoxy-D-xylulose 5-phosphate from D-glyceraldehyde 3-phosphate and pyruvate: step 1/1. Catalyzes the acyloin condensation reaction between C atoms 2 and 3 of pyruvate and glyceraldehyde 3-phosphate to yield 1-deoxy-D-xylulose-5-phosphate (DXP). This chain is 1-deoxy-D-xylulose-5-phosphate synthase, found in Hyphomonas neptunium (strain ATCC 15444).